The chain runs to 353 residues: D-alanine--D-alanine ligase (353 aa).

Positions 141 to 349 constitute an ATP-grasp domain; it reads KAAFAAAGLP…LEELVSQLVI (209 aa). ATP is bound at residue 176–231; it reads EAKLKYPCFVKPANLGSSVGISKAQNRNELLIGLDKAASLDRRIVVEQGVSARELE. Asp-302, Glu-316, and Asn-318 together coordinate Mg(2+).

It belongs to the D-alanine--D-alanine ligase family. Mg(2+) is required as a cofactor. It depends on Mn(2+) as a cofactor.

It is found in the cytoplasm. The catalysed reaction is 2 D-alanine + ATP = D-alanyl-D-alanine + ADP + phosphate + H(+). Its pathway is cell wall biogenesis; peptidoglycan biosynthesis. In terms of biological role, cell wall formation. The polypeptide is D-alanine--D-alanine ligase (Prochlorococcus marinus (strain MIT 9313)).